Reading from the N-terminus, the 325-residue chain is Lipid droplet-associated hydrolase (325 aa).

Residue S139 is the Nucleophile of the active site. Residues D271 and H300 each act as charge relay system in the active site.

Belongs to the AB hydrolase superfamily. LDAH family.

Its subcellular location is the lipid droplet. The protein localises to the endoplasmic reticulum. It catalyses the reaction a cholesterol ester + H2O = cholesterol + a fatty acid + H(+). Functionally, probable serine lipid hydrolase associated with lipid droplets. Has low cholesterol esterase activity. Appears to lack triglyceride lipase activity. Involved in cholesterol and triglyceride homeostasis; stimulates cellular triglyceride accumulation and cellular cholesterol release. Acts antagonistically with PNPLA2/ATGL in regulation of cellular lipid stores. May regulate triglyceride accumulation indirectly through stimulation of PNPLA2/ATGL ubiquitination and proteasomal degradation. Promotes microtubule-dependent lipid droplet fusion. Highly expressed in macrophage-rich areas in atherosclerotic lesions, suggesting that it could promote cholesterol ester turnover in macrophages. This Pongo abelii (Sumatran orangutan) protein is Lipid droplet-associated hydrolase.